The primary structure comprises 143 residues: Nitrosuccinic acid decarboxylase npaB (143 aa).

Belongs to the carboxymuconolactone decarboxylase family. Mg(2+) is required as a cofactor.

It functions in the pathway mycotoxin biosynthesis. In terms of biological role, nitrosuccinic acid decarboxylase; part of the gene cluster that mediates the biosynthesis of the deadly neurotoxic nitroalkane 3-nitropropanoic acid (3-NPA) that acts as an antimetabolite of succinate and irreversibly inhibits succinate dehydrogenase and disrupts mitochondrial oxidative phosphorylation. NpaB facilitates decarboxylation of nitrosuccinic acid produced by the nitrosuccinic acid synthase npaA to yield the final product of the cluster, the lethal mycotoxin 3-NPA. The sequence is that of Nitrosuccinic acid decarboxylase npaB from Metarhizium robertsii (strain ARSEF 23 / ATCC MYA-3075) (Metarhizium anisopliae (strain ARSEF 23)).